A 101-amino-acid polypeptide reads, in one-letter code: MAKMALIQRELKRDNLVAKYAKKHAEFKAIAGDVKRSDEERAAARLGLQKLPRNANPTRQRNRCAITGRPRGTFQHFGLARAKIREMAFAGEIPGIVKASW.

The protein belongs to the universal ribosomal protein uS14 family. Part of the 30S ribosomal subunit. Contacts proteins S3 and S10.

Functionally, binds 16S rRNA, required for the assembly of 30S particles and may also be responsible for determining the conformation of the 16S rRNA at the A site. This is Small ribosomal subunit protein uS14 from Albidiferax ferrireducens (strain ATCC BAA-621 / DSM 15236 / T118) (Rhodoferax ferrireducens).